The primary structure comprises 501 residues: Zinc finger C3HC-type protein 1 (501 aa).

Residue A2 is modified to N-acetylalanine. Residues 21–73 (VVRSPEGTPQKVRELIDEGIVPEEGGTEPKDTAATFQSVDGSPQAEQSPLEST) are disordered. S24 bears the Phosphoserine mark. T28 carries the phosphothreonine modification. Polar residues predominate over residues 54 to 72 (ATFQSVDGSPQAEQSPLES). Phosphoserine occurs at positions 58, 62, and 68. T84 is modified (phosphothreonine). The C3HC-type zinc finger occupies 102–156 (CAKYGWVTVECDMLKCSSCQAFLCASLQPTFDFGRYKERCAELKKSLCSAHEKFC). The tract at residues 302-421 (SPIPGVEGRP…TSPRSFFDPT (120 aa)) is disordered. Phosphoserine occurs at positions 320 and 328. Residues 326-338 (TRSQDATVSPGSE) are compositionally biased toward polar residues. T332 carries the post-translational modification Phosphothreonine. 7 positions are modified to phosphoserine: S334, S337, S343, S353, S358, S369, and S380. Composition is skewed to polar residues over residues 350 to 359 (RTRSWESSSP) and 369 to 383 (SPTTRSRPVTRSMGT). T383 is modified (phosphothreonine). Residue S394 is modified to Phosphoserine. Positions 395–401 (PLRRTKR) match the Nuclear localization signal motif. Residues S406 and S482 each carry the phosphoserine modification. Residues 406 to 420 (SSSSSDTSPRSFFDP) are compositionally biased toward low complexity.

Interacts with TPR; this interaction mediates ZC3HC1 nuclear envelopes (NE)-association but also required for proper positioning of a substantial amount of TPR at the nuclear basket (NB). Phosphorylated. May also be weakly phosphorylated on Tyr residues.

It localises to the nucleus. The protein localises to the nucleus envelope. In terms of biological role, required for proper positioning of a substantial amount of TPR at the nuclear basket (NB) through interaction with TPR. In Mus musculus (Mouse), this protein is Zinc finger C3HC-type protein 1 (Zc3hc1).